The sequence spans 1342 residues: MVYSYTEKKRIRKDFGKRPQVLDIPYLLSIQLDSFTKFIEQDPEGQYGLEAAFRSVFPIQSYNGNSKLEYVSYNLREPEFDVKECQIRGVTYSAPLRVKLRLVVYDKDAPANTVKDIKEQEVYMGEIPLMTDNGTFVINGTERVIVSQLHRSPGVFFDSDKGKTHSSGKVLYNARVIPYRGSWLDFEFDPKDNLFVRIDRRRKLPATIILRALNKTTEEILDLFFDKVVFEVKDQTLMMELLPERLRGETATFDIEANGKVYVEAGRRITARHIRQLTKDDITHIEVPVDYIVGKVASHDYVNEDTGEIIIAANQEFSLEDLANLSQAGYKKIEVLFTNDLDHGAYISDTLRADSTVDRLSALVEIYRMMRPGEPPTKEAAEALFESLFFSEERYDLSTVGRMKFNSSIGRDNDEGAGVLDETDIIEVMRKLIDIRNGIGEVDDIDHLGNRRIRSVGEMAENQFRVGLVRVERAVRERLSLGDLDAIMPQDLINAKPISAAVKEFFGSSQLSQFMDQNNPLSEVTHKRRISALGPGGLTRERAGFEVRDVHATHYGRLCPIETPEGPNIGLINSLSAFAQCNEYGFLETPYRRVVDGQVTDQVDYLSAIEEGTFVIAQANAVLTEEGTFADELIIARQKGESGLHPREHIQYMDVATNQVVSVAASLIPFLEHDDANRALMGANMQRQAVPTLKADKPLVGTGIERNVAVDSGVTAVAKRGGVVQSVDASRIVIKVNEEELVPGEAGIDIYNLTKYTRSNQNTCINQRPTVLPGEPVTRGDVLADGPSTDLGELALGQNMRIAFMPWNGYNFEDSILVSERVVQEDRFTTIHIQELSCVARDTKLGSEEITADIPNVGEAALSKLDESGIVYIGAEVKGGDILVGKVTPKGETQLTPEEKLLRAIFGEKASDVKDSSLRVPNSVSGTIIDVQVFTRDGVEKDKRALEIEQMQLKEAKKDITEEFQILEGGLLARVRTLLVAAGVSEVKLDAMDRKQWLEITLDDEAQQNQLEQLAEQYDELKAEFDKKFETKRRKITQGDDLAPGVLKIVKVYLAVKRRIQPGDKMAGRHGNKGVISKINPVEDMPYDEKGQPVDIVLNPLGVPSRMNIGQILEVHMGLAAKGVGDKINQMLKEQQELHKFRNFLQKVYDLGETRQEVDIAALSDDEVRTLIKNLRGGLPIATPIFDGAPEASIKELLKLVDLPESGQLKLFDGRTGDAFERPVTVGYMYMLKLNHLVDDKMHARSTGSYSLVTQQPLGGKAQFGGQRFGEMEVWALEAYGAAYTLQEMLTVKSDDVNGRTKMYKNIVDGDHRMEPGMPESFNVLLKEIRSLGINIELEDEE.

It belongs to the RNA polymerase beta chain family. In terms of assembly, the RNAP catalytic core consists of 2 alpha, 1 beta, 1 beta' and 1 omega subunit. When a sigma factor is associated with the core the holoenzyme is formed, which can initiate transcription.

The enzyme catalyses RNA(n) + a ribonucleoside 5'-triphosphate = RNA(n+1) + diphosphate. Its function is as follows. DNA-dependent RNA polymerase catalyzes the transcription of DNA into RNA using the four ribonucleoside triphosphates as substrates. The chain is DNA-directed RNA polymerase subunit beta from Aliivibrio fischeri (strain MJ11) (Vibrio fischeri).